Here is a 540-residue protein sequence, read N- to C-terminus: Chaperonin GroEL (540 aa).

Residues 30 to 33, Lys-51, 87 to 91, Gly-415, 479 to 481, and Asp-495 each bind ATP; these read TLGP, DGTTT, and NAA.

The protein belongs to the chaperonin (HSP60) family. In terms of assembly, forms a cylinder of 14 subunits composed of two heptameric rings stacked back-to-back. Interacts with the co-chaperonin GroES.

Its subcellular location is the cytoplasm. It catalyses the reaction ATP + H2O + a folded polypeptide = ADP + phosphate + an unfolded polypeptide.. Its function is as follows. Together with its co-chaperonin GroES, plays an essential role in assisting protein folding. The GroEL-GroES system forms a nano-cage that allows encapsulation of the non-native substrate proteins and provides a physical environment optimized to promote and accelerate protein folding. The sequence is that of Chaperonin GroEL from Raoultella planticola (Klebsiella planticola).